The sequence spans 212 residues: Negative modulator of initiation of replication (212 aa).

2 interaction with DNA regions span residues 113–114 (AV) and 144–148 (RTRVY).

The protein belongs to the SeqA family. As to quaternary structure, homodimer. Polymerizes to form helical filaments.

The protein localises to the cytoplasm. Its function is as follows. Negative regulator of replication initiation, which contributes to regulation of DNA replication and ensures that replication initiation occurs exactly once per chromosome per cell cycle. Binds to pairs of hemimethylated GATC sequences in the oriC region, thus preventing assembly of replication proteins and re-initiation at newly replicated origins. Repression is relieved when the region becomes fully methylated. The chain is Negative modulator of initiation of replication from Actinobacillus succinogenes (strain ATCC 55618 / DSM 22257 / CCUG 43843 / 130Z).